A 199-amino-acid polypeptide reads, in one-letter code: Calcium-binding protein CAST (199 aa).

Positions 1 to 13 (MGSVQDENKDEFK) are enriched in basic and acidic residues. The disordered stretch occupies residues 1-31 (MGSVQDENKDEFKQSLTRGKLKPSSSSSFRL). EF-hand domains follow at residues 36–71 (LNSIRLRRIFDVFDRNHDCLISVEELSQALNLLGLD), 75–110 (SEIESMVKLHIKPENTGLRFEDFETLHRSLNDVFFG), 125–160 (QDESDLKEAFDVFDENGDGFISAKELQVVLEKLGLP), and 163–198 (SEIDRVEMMISSVEQDHDGRVDFFEFKDMMRTVIVP). Ca(2+)-binding residues include Asp-49, Asn-51, Asp-53, and Glu-60. Ca(2+) is bound by residues Asp-138, Asn-140, Asp-142, Glu-149, Asp-178, Asp-180, Arg-182, and Glu-187.

In terms of biological role, not known. Probably binds 3 calcium ions. This chain is Calcium-binding protein CAST, found in Solanum tuberosum (Potato).